The chain runs to 290 residues: Ribosomal RNA small subunit methyltransferase A (290 aa).

The S-adenosyl-L-methionine site is built by asparagine 27, leucine 29, glycine 54, glutamate 75, aspartate 100, and asparagine 125.

Belongs to the class I-like SAM-binding methyltransferase superfamily. rRNA adenine N(6)-methyltransferase family. RsmA subfamily.

It localises to the cytoplasm. It carries out the reaction adenosine(1518)/adenosine(1519) in 16S rRNA + 4 S-adenosyl-L-methionine = N(6)-dimethyladenosine(1518)/N(6)-dimethyladenosine(1519) in 16S rRNA + 4 S-adenosyl-L-homocysteine + 4 H(+). In terms of biological role, specifically dimethylates two adjacent adenosines (A1518 and A1519) in the loop of a conserved hairpin near the 3'-end of 16S rRNA in the 30S particle. May play a critical role in biogenesis of 30S subunits. The chain is Ribosomal RNA small subunit methyltransferase A from Streptococcus thermophilus (strain ATCC BAA-491 / LMD-9).